We begin with the raw amino-acid sequence, 375 residues long: Probable UDP-N-acetylglucosamine 2-epimerase (375 aa).

The protein belongs to the UDP-N-acetylglucosamine 2-epimerase family.

It is found in the cytoplasm. The enzyme catalyses UDP-N-acetyl-alpha-D-glucosamine = UDP-N-acetyl-alpha-D-mannosamine. The protein operates within glycan metabolism; exopolysaccharide EPS I biosynthesis. Functionally, may be involved in synthesis of N-acetyltrideoxygalactose, a component of exopolysaccharide EPS I which functions as a virulence factor. This is Probable UDP-N-acetylglucosamine 2-epimerase (epsC) from Ralstonia nicotianae (strain ATCC BAA-1114 / GMI1000) (Ralstonia solanacearum).